Reading from the N-terminus, the 593-residue chain is Metal-response element-binding transcription factor 2 (593 aa).

The segment at 1-24 is disordered; it reads MRDSTGAGNSLVHKRSPLRRNQKT. Residues 12-22 show a composition bias toward basic residues; sequence VHKRSPLRRNQ. Thr24 bears the Phosphothreonine mark. The Tudor domain occupies 44 to 101; it reads CKFEEGQDVLARWSDGLFYLGTIKKINILKQSCFIIFEDSSKSWVLWKDIQTGATGSG. PHD-type zinc fingers lie at residues 102–157 and 201–255; these read EMVC…CVFA and QCYC…CSSG. 2 disordered regions span residues 357 to 410 and 444 to 486; these read VAFK…GPYT and GIAH…TRTG. Residue Lys360 forms a Glycyl lysine isopeptide (Lys-Gly) (interchain with G-Cter in SUMO2) linkage. Positions 360–374 are enriched in basic and acidic residues; sequence KAEKEPEGTSHEFKI. Positions 447–470 are enriched in polar residues; it reads HSSNTSDVDLTGASSANETTSASI. Phosphoserine is present on Ser452. A Glycyl lysine isopeptide (Lys-Gly) (interchain with G-Cter in SUMO2) cross-link involves residue Lys522.

Belongs to the Polycomblike family. In terms of assembly, associates with the PRC2 complex, which consists of the core components EED, EZH1 or EZH2, SUZ12, and RBBP4, and various combinations of accessory subunits including AEBP2, JARID2, PHF19, MTF2 and EPOP. Forms a dimeric PRC2.1 (class 1, PRC-PCL) complex consisting of at least SUZ12, RBBP4, and PHF19 or MTF2; PHF19 and MTF2 stabilize the dimeric structure which enhances PRC2 interaction with chromatin.

It localises to the nucleus. Polycomb group (PcG) protein that specifically binds histone H3 trimethylated at 'Lys-36' (H3K36me3) and recruits the PRC2 complex, thus enhancing PRC2 H3K27me3 methylation activity. Regulates the transcriptional networks during embryonic stem cell self-renewal and differentiation. Promotes recruitment of the PRC2 complex to the inactive X chromosome in differentiating XX ES cells and PRC2 recruitment to target genes in undifferentiated ES cells. Required to repress Hox genes by enhancing H3K27me3 methylation of the PRC2 complex. In some conditions may act as an inhibitor of PRC2 activity: able to activate the CDKN2A gene and promote cellular senescence by suppressing the catalytic activity of the PRC2 complex locally. Binds to the metal-regulating-element (MRE) of MT1A gene promoter. The chain is Metal-response element-binding transcription factor 2 (Mtf2) from Mus musculus (Mouse).